Reading from the N-terminus, the 154-residue chain is Myoglobin (154 aa).

The Globin domain maps to 2–148 (GLSDGEWQIV…FRNDIAAKYK (147 aa)). S4 bears the Phosphoserine mark. Residue H65 coordinates nitrite. O2 is bound at residue H65. The residue at position 68 (T68) is a Phosphothreonine. H94 serves as a coordination point for heme b.

This sequence belongs to the globin family. In terms of assembly, monomeric.

The protein localises to the cytoplasm. The protein resides in the sarcoplasm. It catalyses the reaction Fe(III)-heme b-[protein] + nitric oxide + H2O = Fe(II)-heme b-[protein] + nitrite + 2 H(+). The catalysed reaction is H2O2 + AH2 = A + 2 H2O. Functionally, monomeric heme protein which primary function is to store oxygen and facilitate its diffusion within muscle tissues. Reversibly binds oxygen through a pentacoordinated heme iron and enables its timely and efficient release as needed during periods of heightened demand. Depending on the oxidative conditions of tissues and cells, and in addition to its ability to bind oxygen, it also has a nitrite reductase activity whereby it regulates the production of bioactive nitric oxide. Under stress conditions, like hypoxia and anoxia, it also protects cells against reactive oxygen species thanks to its pseudoperoxidase activity. This is Myoglobin (MB) from Lycaon pictus (African wild dog).